Consider the following 742-residue polypeptide: CD44 antigen (742 aa).

An N-terminal signal peptide occupies residues 1–20 (MDKFWWHAAWGLCLVPLSLA). Topologically, residues 21–649 (QIDLNITCRF…GPIRTPQIPE (629 aa)) are extracellular. The N-linked (GlcNAc...) asparagine glycan is linked to Asn-25. 3 cysteine pairs are disulfide-bonded: Cys-28/Cys-129, Cys-53/Cys-118, and Cys-77/Cys-97. Positions 32-120 (GVFHVEKNGR…TSQYDTYCFN (89 aa)) constitute a Link domain. Arg-41 contributes to the hyaluronan binding site. Asn-57 carries N-linked (GlcNAc...) asparagine glycosylation. The hyaluronan site is built by Arg-78 and Tyr-79. A glycan (N-linked (GlcNAc...) asparagine) is linked at Asn-100. Tyr-105 provides a ligand contact to hyaluronan. N-linked (GlcNAc...) asparagine glycosylation is found at Asn-110 and Asn-120. Disordered regions lie at residues 160 to 189 (EYRT…RSST) and 261 to 285 (TTQM…NEDE). Residues 179–189 (SSGSSSERSST) show a composition bias toward low complexity. Ser-180 carries an O-linked (Xyl...) (chondroitin sulfate) serine glycan. A stem region spans residues 224–649 (LMSTSATATE…GPIRTPQIPE (426 aa)). Positions 261-273 (TTQMAGTSSNTIS) are enriched in polar residues. Asn-350 carries an N-linked (GlcNAc...) asparagine glycan. 2 disordered regions span residues 372–558 (HHEE…TLLE) and 590–642 (TVGD…SGPI). A compositionally biased stretch (low complexity) spans 386–396 (QATPSSTTEET). The segment covering 407–421 (RWHEGYRQTPKEDSH) has biased composition (basic and acidic residues). Positions 422-435 (STTGTAAASAHTSH) are enriched in low complexity. Composition is skewed to polar residues over residues 439–452 (GRTT…SWTD) and 476–489 (SHSI…NPNT). The span at 502-516 (SMTTQQSNSQSFSTS) shows a compositional bias: low complexity. The span at 528 to 539 (TTSTLTSSNRND) shows a compositional bias: polar residues. N-linked (GlcNAc...) asparagine glycosylation is found at Asn-548 and Asn-599. Over residues 592–606 (GDSNSNVNRSLSGDQ) the composition is skewed to polar residues. Basic and acidic residues predominate over residues 619–629 (HGSESDGHSHG). N-linked (GlcNAc...) asparagine glycosylation is present at Asn-636. The chain crosses the membrane as a helical span at residues 650-670 (WLIILASLLALALILAVCIAV). The Cytoplasmic portion of the chain corresponds to 671–742 (NSRRRCGQKK…LQNVDMKIGV (72 aa)). Position 672 is a phosphoserine; by PKC (Ser-672). Residues 673 to 691 (RRRCGQKKKLVINSGNGAV) are required for interaction with EZR, MSN and RDX and for co-localization to microvilli. Phosphoserine occurs at positions 686, 697, and 706.

Interacts with PKN2. Interacts with TIAM1 and TIAM2. Interacts with HA, as well as other glycosaminoglycans, collagen, laminin, and fibronectin via its N-terminal segment. Interacts with UNC119. Interacts with PDPN (via extracellular domain); this interaction is required for PDPN-mediated directional migration and regulation of lamellipodia extension/stabilization during cell spreading and migration. Interacts with RDX, EZR and MSN. Interacts with EGFR. Interacts with CD74; this complex is essential for the MIF-induced signaling cascade that results in B cell survival. Proteolytically cleaved in the extracellular matrix by specific proteinases (possibly MMPs) in several cell lines and tumors. Post-translationally, N-glycosylated. In terms of processing, O-glycosylated; contains chondroitin sulfate glycans which can be more or less sulfated and whose number may affect the accessibility of specific proteinases to their cleavage site(s). It is uncertain if O-glycosylation occurs on Thr-637 or Thr-638. Phosphorylated; activation of PKC results in the dephosphorylation of Ser-706 (constitutive phosphorylation site), and the phosphorylation of Ser-672. Detected in fibroblasts and urine (at protein level). Detected in placenta (at protein level). Isoform 10 (epithelial isoform) is expressed by cells of epithelium and highly expressed by carcinomas. Expression is repressed in neuroblastoma cells.

It is found in the cell membrane. The protein localises to the cell projection. Its subcellular location is the microvillus. It localises to the secreted. Cell-surface receptor that plays a role in cell-cell interactions, cell adhesion and migration, helping them to sense and respond to changes in the tissue microenvironment. Participates thereby in a wide variety of cellular functions including the activation, recirculation and homing of T-lymphocytes, hematopoiesis, inflammation and response to bacterial infection. Engages, through its ectodomain, extracellular matrix components such as hyaluronan/HA, collagen, growth factors, cytokines or proteases and serves as a platform for signal transduction by assembling, via its cytoplasmic domain, protein complexes containing receptor kinases and membrane proteases. Such effectors include PKN2, the RhoGTPases RAC1 and RHOA, Rho-kinases and phospholipase C that coordinate signaling pathways promoting calcium mobilization and actin-mediated cytoskeleton reorganization essential for cell migration and adhesion. The polypeptide is CD44 antigen (CD44) (Homo sapiens (Human)).